A 253-amino-acid chain; its full sequence is NAD-dependent protein deacylase 2 (253 aa).

The Deacetylase sirtuin-type domain occupies 1 to 252 (MEDEIRKAAE…VEEVKRLRSE (252 aa)). NAD(+) contacts are provided by residues 23–42 (GAGI…DGLW) and 100–103 (QNID). Residue His118 is the Proton acceptor of the active site. Cys126, Cys129, Cys150, and Cys153 together coordinate Zn(2+). NAD(+) is bound by residues 191-193 (GSS), 217-219 (NAE), and Ala235.

It belongs to the sirtuin family. Class III subfamily. It depends on Zn(2+) as a cofactor.

The protein resides in the cytoplasm. It carries out the reaction N(6)-acetyl-L-lysyl-[protein] + NAD(+) + H2O = 2''-O-acetyl-ADP-D-ribose + nicotinamide + L-lysyl-[protein]. Functionally, NAD-dependent protein deacetylase which modulates the activities of several proteins which are inactive in their acetylated form. Deacetylates the N-terminal lysine residue of Alba, the major archaeal chromatin protein and that, in turn, increases Alba's DNA binding affinity, thereby repressing transcription. The polypeptide is NAD-dependent protein deacylase 2 (Archaeoglobus fulgidus (strain ATCC 49558 / DSM 4304 / JCM 9628 / NBRC 100126 / VC-16)).